The following is a 246-amino-acid chain: MAGHSKWANIQHRKGKQDKLRSKLFSKLAKEITVAAKMGDPDPEKNPRLRLAVKEAKSNSMPKDVIDRAIKKSQGGDAENYDEIRYEGYGPNGIAIIVEAMTDNRNRTASNVRSYFTKYGGDLGQTGSVSFMFDRKGEILYKPDAGDADTVMMAAIEAGAEDVESDEDGHWIYTADTDLAEVSTALEASLGESEHAKLIWKPQAPTEIDLETATKLMKLIDALEEDDDVQNVTGNFDIPEEVAAQL.

Residues 1–21 (MAGHSKWANIQHRKGKQDKLR) are disordered.

Belongs to the TACO1 family.

It is found in the cytoplasm. In Paracoccus denitrificans (strain Pd 1222), this protein is Probable transcriptional regulatory protein Pden_1905.